The following is a 37-amino-acid chain: Disintegrin morulustatin (37 aa).

Intrachain disulfides connect Cys12–Cys16, Cys22–Cys36, and Cys24–Cys31.

It belongs to the venom metalloproteinase (M12B) family. P-II subfamily. P-IIa sub-subfamily. As to expression, expressed by the venom gland.

It localises to the secreted. In terms of biological role, inhibits ADP-induced platelet aggregation in human whole blood in a concentration-dependent manner (IC(50)=89.5 nM). In Crotalus morulus (Tamaulipan rock rattlesnake), this protein is Disintegrin morulustatin.